The primary structure comprises 476 residues: UDP-N-acetylmuramate--L-alanine ligase (476 aa).

Residue 126–132 (GAHGKTT) coordinates ATP.

The protein belongs to the MurCDEF family.

It is found in the cytoplasm. The catalysed reaction is UDP-N-acetyl-alpha-D-muramate + L-alanine + ATP = UDP-N-acetyl-alpha-D-muramoyl-L-alanine + ADP + phosphate + H(+). Its pathway is cell wall biogenesis; peptidoglycan biosynthesis. In terms of biological role, cell wall formation. The chain is UDP-N-acetylmuramate--L-alanine ligase from Psychrobacter sp. (strain PRwf-1).